The following is a 62-amino-acid chain: MFAVEMKFEVPVCTSCGKEITPREHATHFVCPNCGEAIIWRCESCRVLSVPYKCPKCGWEGP.

Residues cysteine 13, cysteine 16, cysteine 31, cysteine 34, cysteine 42, cysteine 45, cysteine 54, and cysteine 57 each contribute to the Zn(2+) site.

As to quaternary structure, crystallized in association with 70S ribosomes. The cofactor is Zn(2+).

The polypeptide is Double zinc ribbon protein TK0111 (Thermococcus kodakarensis (strain ATCC BAA-918 / JCM 12380 / KOD1) (Pyrococcus kodakaraensis (strain KOD1))).